The chain runs to 175 residues: Peptide deformylase (175 aa).

The Fe cation site is built by C96 and H138. E139 is an active-site residue. H142 lines the Fe cation pocket.

Belongs to the polypeptide deformylase family. Fe(2+) is required as a cofactor.

It carries out the reaction N-terminal N-formyl-L-methionyl-[peptide] + H2O = N-terminal L-methionyl-[peptide] + formate. Its function is as follows. Removes the formyl group from the N-terminal Met of newly synthesized proteins. Requires at least a dipeptide for an efficient rate of reaction. N-terminal L-methionine is a prerequisite for activity but the enzyme has broad specificity at other positions. This Helicobacter acinonychis (strain Sheeba) protein is Peptide deformylase.